The chain runs to 37 residues: Large ribosomal subunit protein bL36 (37 aa).

Belongs to the bacterial ribosomal protein bL36 family.

The polypeptide is Large ribosomal subunit protein bL36 (Aliivibrio fischeri (strain ATCC 700601 / ES114) (Vibrio fischeri)).